The sequence spans 315 residues: L-lactate dehydrogenase (315 aa).

Positions 14, 35, and 66 each coordinate NAD(+). Substrate is bound by residues Q83, R89, and 121-124 (NPVD). NAD(+)-binding positions include 119 to 121 (VAN) and S144. 149–152 (DTAR) contributes to the substrate binding site. H176 serves as the catalytic Proton acceptor. The residue at position 221 (Y221) is a Phosphotyrosine. Position 230 (T230) interacts with substrate.

It belongs to the LDH/MDH superfamily. LDH family. As to quaternary structure, homotetramer.

Its subcellular location is the cytoplasm. The enzyme catalyses (S)-lactate + NAD(+) = pyruvate + NADH + H(+). It functions in the pathway fermentation; pyruvate fermentation to lactate; (S)-lactate from pyruvate: step 1/1. Functionally, catalyzes the conversion of lactate to pyruvate. This chain is L-lactate dehydrogenase, found in Mesomycoplasma hyopneumoniae (strain 7448) (Mycoplasma hyopneumoniae).